A 257-amino-acid chain; its full sequence is 8-demethyl-8-aminoriboflavin-5'-phosphate synthase (257 aa).

FMN-binding positions include 11–13 (TLR), 19–21 (SQT), 91–94 (ITLN), 132–136 (CGNED), and Y240.

Belongs to the SsuE family. Homotetramer.

It catalyses the reaction FMN + L-glutamate + 3 A + O2 + H2O = 8-amino-8-demethylriboflavin 5'-phosphate + 2-oxoglutarate + 3 AH2 + CO2 + H(+). It participates in antibiotic biosynthesis. Involved in the biosynthesis of the riboflavin analog antibiotic roseoflavin (3,8-dimethylamino-riboflavin). Catalyzes the site-specific substitution of the C-8 methyl group of riboflavin-5'-phosphate (FMN) by an amino group to yield 8-amino-8-demethylriboflavin 5'-phosphate, via a combined oxidation, decarboxylation and transamination reaction. The catalysis is initiated by an oxidation step in which the C-8 methyl group on the dimethylbenzene ring of FMN is converted to a formyl group to yield the 8-demethyl-8-formylriboflavin-5'-phosphate (OHC-RP) intermediate. In the presence of thiamine, the formyl group is oxidized into a carboxyl group to yield the 8-demethyl-8-carboxyriboflavin-5'-phosphate (HO2C-RP) intermediate. Finally, in the presence of L-glutamate as an amino donor, decarboxylation and aminotransfer occur, resulting in production of 8-demethyl-8-aminoriboflavin-5'-phosphate. Addition of NAD (but not NADP) to the reaction increases the yield 1.7-fold. The reaction also proceeds without the addition of any electron acceptor, and it is possible that molecular oxygen serves this role. This chain is 8-demethyl-8-aminoriboflavin-5'-phosphate synthase, found in Streptomyces davaonensis (strain DSM 101723 / JCM 4913 / KCC S-0913 / 768).